A 258-amino-acid polypeptide reads, in one-letter code: Kallikrein-1 (258 aa).

The N-terminal stretch at 1-18 (MWFLVLCLALSLGGTGAA) is a signal peptide. A propeptide spans 19–24 (PPIQSR) (activation peptide). The Peptidase S1 domain occupies 25–255 (IVGGWECSQP…YVKWIEDTIA (231 aa)). Disulfide bonds link C31/C170, C47/C63, C149/C216, C181/C195, and C206/C231. H62 functions as the Charge relay system in the catalytic mechanism. An O-linked (GalNAc...) serine glycan is attached at S90. An N-linked (GlcNAc...) asparagine glycan is attached at N99. O-linked (GalNAc...) serine glycosylation occurs at S101. N105 is a glycosylation site (N-linked (GlcNAc...) asparagine). The Charge relay system role is filled by D117. The N-linked (GlcNAc...) asparagine glycan is linked to N161. Residue S163 is glycosylated (O-linked (GalNAc...) serine). S210 acts as the Charge relay system in catalysis.

This sequence belongs to the peptidase S1 family. Kallikrein subfamily.

The catalysed reaction is Preferential cleavage of Arg-|-Xaa bonds in small molecule substrates. Highly selective action to release kallidin (lysyl-bradykinin) from kininogen involves hydrolysis of Met-|-Xaa or Leu-|-Xaa.. In terms of biological role, glandular kallikreins cleave Met-Lys and Arg-Ser bonds in kininogen to release Lys-bradykinin. This is Kallikrein-1 (KLK1) from Papio hamadryas (Hamadryas baboon).